We begin with the raw amino-acid sequence, 462 residues long: Cell wall mannoprotein 1 (462 aa).

A signal peptide spans 1 to 18; sequence MKFLSSLVVLGLSAQALA. A hexadecanoate-binding site is contributed by Ser313. A disordered region spans residues 346 to 429; the sequence is FAGTGPAPTT…SVPAAPTGGN (84 aa). Residues 347–366 are compositionally biased toward low complexity; the sequence is AGTGPAPTTSSTPEASTAPA. Polar residues predominate over residues 399–420; the sequence is VWPTSTTASPDVQPTITSSGTS.

Belongs to the cell wall mannoprotein 1 family. In terms of assembly, monomer. Post-translationally, mannoprotein, glycosylated.

It is found in the secreted. Its subcellular location is the cell wall. Constitutive protein of the cell wall. Binds fatty acids and may thus serve as a fatty acid transporter between P.marneffei and host cells during infection. Abundant antigen target of host humoral immune response. This is Cell wall mannoprotein 1 from Talaromyces marneffei (Penicillium marneffei).